The chain runs to 880 residues: Alanine--tRNA ligase (880 aa).

Residues His565, His569, Cys675, and His679 each contribute to the Zn(2+) site.

It belongs to the class-II aminoacyl-tRNA synthetase family. It depends on Zn(2+) as a cofactor.

The protein localises to the cytoplasm. The enzyme catalyses tRNA(Ala) + L-alanine + ATP = L-alanyl-tRNA(Ala) + AMP + diphosphate. In terms of biological role, catalyzes the attachment of alanine to tRNA(Ala) in a two-step reaction: alanine is first activated by ATP to form Ala-AMP and then transferred to the acceptor end of tRNA(Ala). Also edits incorrectly charged Ser-tRNA(Ala) and Gly-tRNA(Ala) via its editing domain. The chain is Alanine--tRNA ligase from Granulibacter bethesdensis (strain ATCC BAA-1260 / CGDNIH1).